Here is a 218-residue protein sequence, read N- to C-terminus: Riboflavin synthase (218 aa).

Lumazine-binding repeat units follow at residues 1 to 97 (MFTG…FGGH) and 98 to 194 (IVSG…ERLL). 2,4-dihydroxypteridine contacts are provided by residues 4–6 (GII), 48–50 (CLT), 62–67 (DLSIET), 101–103 (GHV), Lys-136, 145–147 (SLT), and 159–164 (TIVPHT).

Homotrimer.

It carries out the reaction 2 6,7-dimethyl-8-(1-D-ribityl)lumazine + H(+) = 5-amino-6-(D-ribitylamino)uracil + riboflavin. It participates in cofactor biosynthesis; riboflavin biosynthesis; riboflavin from 2-hydroxy-3-oxobutyl phosphate and 5-amino-6-(D-ribitylamino)uracil: step 2/2. Catalyzes the dismutation of two molecules of 6,7-dimethyl-8-ribityllumazine, resulting in the formation of riboflavin and 5-amino-6-(D-ribitylamino)uracil. The polypeptide is Riboflavin synthase (Photobacterium phosphoreum).